Here is a 257-residue protein sequence, read N- to C-terminus: tRNA (guanine-N(7)-)-methyltransferase (257 aa).

A disordered region spans residues 1-42 (MTVVVSDHQNPRPPGDDAAPLGRTGNRDRPPGSFFGRRKGHR). 4 residues coordinate S-adenosyl-L-methionine: E84, E109, D136, and D158. The active site involves D158. 2 residues coordinate substrate: K162 and D194.

It belongs to the class I-like SAM-binding methyltransferase superfamily. TrmB family.

The catalysed reaction is guanosine(46) in tRNA + S-adenosyl-L-methionine = N(7)-methylguanosine(46) in tRNA + S-adenosyl-L-homocysteine. It participates in tRNA modification; N(7)-methylguanine-tRNA biosynthesis. In terms of biological role, catalyzes the formation of N(7)-methylguanine at position 46 (m7G46) in tRNA. The chain is tRNA (guanine-N(7)-)-methyltransferase from Nitrobacter winogradskyi (strain ATCC 25391 / DSM 10237 / CIP 104748 / NCIMB 11846 / Nb-255).